Reading from the N-terminus, the 144-residue chain is Large ribosomal subunit protein uL15 (144 aa).

Residues 1–52 are disordered; the sequence is MKLHTLKSTPGARVEKHRVGRGHAAGKGKQAGKGQSGQNKRHGHRLGFEGGQ. Residues 15–26 are compositionally biased toward basic residues; the sequence is EKHRVGRGHAAG.

This sequence belongs to the universal ribosomal protein uL15 family. In terms of assembly, part of the 50S ribosomal subunit.

In terms of biological role, binds to the 23S rRNA. The sequence is that of Large ribosomal subunit protein uL15 from Mycoplasmopsis agalactiae (strain NCTC 10123 / CIP 59.7 / PG2) (Mycoplasma agalactiae).